The sequence spans 203 residues: Pyrrolidone-carboxylate peptidase (203 aa).

Catalysis depends on residues glutamate 78, cysteine 141, and histidine 165.

It belongs to the peptidase C15 family. As to quaternary structure, homotetramer.

It localises to the cytoplasm. The enzyme catalyses Release of an N-terminal pyroglutamyl group from a polypeptide, the second amino acid generally not being Pro.. Removes 5-oxoproline from various penultimate amino acid residues except L-proline. The sequence is that of Pyrrolidone-carboxylate peptidase from Thermoanaerobacter pseudethanolicus (strain ATCC 33223 / 39E) (Clostridium thermohydrosulfuricum).